Consider the following 168-residue polypeptide: Probable chemoreceptor glutamine deamidase CheD (168 aa).

It belongs to the CheD family.

The catalysed reaction is L-glutaminyl-[protein] + H2O = L-glutamyl-[protein] + NH4(+). Its function is as follows. Probably deamidates glutamine residues to glutamate on methyl-accepting chemotaxis receptors (MCPs), playing an important role in chemotaxis. The sequence is that of Probable chemoreceptor glutamine deamidase CheD from Pseudomonas syringae pv. tomato (strain ATCC BAA-871 / DC3000).